The sequence spans 181 residues: Inner kinetochore subunit MCM16 (181 aa).

Positions 112–171 (KQLIESRAERDELMSKLIELSSKFPKPTIPPDDSDTAGKQVEVEKENETIQELMIALQIH) form a coiled coil.

Belongs to the CENP-H/MCM16 family. In terms of assembly, component of the heterotrimeric kinetochore subcomplex CTF3, which consists of CTF3, MCM16 and MCM22. The CTF3 subcomplex is part of a larger constitutive centromere-associated network (CCAN) (also known as central kinetochore CTF19 complex in yeast), which is composed of at least AME1, CHL4, CNN1, CTF3, CTF19, IML3, MCM16, MCM21, MCM22, MHF1, MHF2, MIF2, NKP1, NKP2, OKP1 and WIP1. Interacts with CTF19.

The protein localises to the nucleus. It localises to the chromosome. The protein resides in the centromere. It is found in the kinetochore. Its function is as follows. Component of the kinetochore, a multiprotein complex that assembles on centromeric DNA and attaches chromosomes to spindle microtubules, mediating chromosome segregation and sister chromatid segregation during meiosis and mitosis. Component of the inner kinetochore constitutive centromere-associated network (CCAN), which serves as a structural platform for outer kinetochore assembly. This chain is Inner kinetochore subunit MCM16 (MCM16), found in Saccharomyces cerevisiae (strain ATCC 204508 / S288c) (Baker's yeast).